The chain runs to 100 residues: Ferredoxin (100 aa).

Positions 1 to 8 (MLSQVCRF) are excised as a propeptide. The 92-residue stretch at 9–100 (GTITAVKGGV…GENDGAVFEL (92 aa)) folds into the 2Fe-2S ferredoxin-type domain. 4 residues coordinate [2Fe-2S] cluster: cysteine 46, cysteine 52, cysteine 55, and cysteine 85.

The cofactor is [2Fe-2S] cluster.

The protein localises to the hydrogenosome. Functionally, ferredoxins are iron-sulfur proteins that transfer electrons in a wide variety of metabolic reactions. It links pyruvate:ferredoxin oxidoreductase to hydrogenase. The sequence is that of Ferredoxin from Trichomonas vaginalis.